A 198-amino-acid polypeptide reads, in one-letter code: tRNA (pseudouridine(54)-N(1))-methyltransferase (198 aa).

Leucine 128 is an S-adenosyl-L-methionine binding site.

The protein belongs to the methyltransferase superfamily. TrmY family. In terms of assembly, homodimer.

The protein localises to the cytoplasm. The catalysed reaction is pseudouridine(54) in tRNA + S-adenosyl-L-methionine = N(1)-methylpseudouridine(54) in tRNA + S-adenosyl-L-homocysteine + H(+). Its function is as follows. Specifically catalyzes the N1-methylation of pseudouridine at position 54 (Psi54) in tRNAs. This chain is tRNA (pseudouridine(54)-N(1))-methyltransferase, found in Haloarcula marismortui (strain ATCC 43049 / DSM 3752 / JCM 8966 / VKM B-1809) (Halobacterium marismortui).